An 86-amino-acid chain; its full sequence is Cell division topological specificity factor (86 aa).

The protein belongs to the MinE family.

Its function is as follows. Prevents the cell division inhibition by proteins MinC and MinD at internal division sites while permitting inhibition at polar sites. This ensures cell division at the proper site by restricting the formation of a division septum at the midpoint of the long axis of the cell. The sequence is that of Cell division topological specificity factor from Shewanella frigidimarina (strain NCIMB 400).